We begin with the raw amino-acid sequence, 867 residues long: Elongation factor 2 (867 aa).

In terms of domain architecture, tr-type G spans 17–368 (HNIRNLSVVA…MIVLHLPSPV (352 aa)). GTP is bound at residue 26-33 (AHVDHGKS). Phosphothreonine occurs at positions 57 and 59. GTP-binding positions include 176-179 (NKLD) and 231-233 (SGL). The residue at position 723 (His723) is a Diphthamide.

This sequence belongs to the TRAFAC class translation factor GTPase superfamily. Classic translation factor GTPase family. EF-G/EF-2 subfamily. Post-translationally, phosphorylation by EF-2 kinase completely inactivates EF-2.

It localises to the cytoplasm. The catalysed reaction is GTP + H2O = GDP + phosphate + H(+). Functionally, catalyzes the GTP-dependent ribosomal translocation step during translation elongation. During this step, the ribosome changes from the pre-translocational (PRE) to the post-translocational (POST) state as the newly formed A-site-bound peptidyl-tRNA and P-site-bound deacylated tRNA move to the P and E sites, respectively. Catalyzes the coordinated movement of the two tRNA molecules, the mRNA and conformational changes in the ribosome. The chain is Elongation factor 2 from Blastocystis hominis.